Reading from the N-terminus, the 194-residue chain is ATP synthase subunit delta (194 aa).

This sequence belongs to the ATPase delta chain family. F-type ATPases have 2 components, F(1) - the catalytic core - and F(0) - the membrane proton channel. F(1) has five subunits: alpha(3), beta(3), gamma(1), delta(1), epsilon(1). F(0) has three main subunits: a(1), b(2) and c(10-14). The alpha and beta chains form an alternating ring which encloses part of the gamma chain. F(1) is attached to F(0) by a central stalk formed by the gamma and epsilon chains, while a peripheral stalk is formed by the delta and b chains.

Its subcellular location is the cell inner membrane. In terms of biological role, f(1)F(0) ATP synthase produces ATP from ADP in the presence of a proton or sodium gradient. F-type ATPases consist of two structural domains, F(1) containing the extramembraneous catalytic core and F(0) containing the membrane proton channel, linked together by a central stalk and a peripheral stalk. During catalysis, ATP synthesis in the catalytic domain of F(1) is coupled via a rotary mechanism of the central stalk subunits to proton translocation. Its function is as follows. This protein is part of the stalk that links CF(0) to CF(1). It either transmits conformational changes from CF(0) to CF(1) or is implicated in proton conduction. The chain is ATP synthase subunit delta from Parvibaculum lavamentivorans (strain DS-1 / DSM 13023 / NCIMB 13966).